A 230-amino-acid polypeptide reads, in one-letter code: Sugar fermentation stimulation protein homolog (230 aa).

This sequence belongs to the SfsA family.

This is Sugar fermentation stimulation protein homolog from Pelobacter propionicus (strain DSM 2379 / NBRC 103807 / OttBd1).